Reading from the N-terminus, the 1778-residue chain is MDDKEPKRWPTLRDRLCSDGFLFPQYPIKPYHLKGIHRAVFYRDLEELKFVLLTRYDINKRDRKERTALHLACATGQPEMVHLLVSRRCELNLCDREDRTPLIKAVQLRQEACATLLLQNGADPNITDVFGRTALHYAVYNEDTSMIEKLLSYGANIEECSEDEYPPLFLAVSQRKVKMVEFLLKKKANINAVDYLGRSALIHAVTLGEKDIVILLLQHNIDVFSRDVYGKLAEDYASEAKNRVIFELIYEYERKKHEELSINSNPVSSQKQPALKATSGKEDSISNIATEIKDGQKSGTVSSQKQPALKGTSDKNDSVSNTATEIKDEQKSGTVSSQKQPALKDTSDKNDSVSNTATEIKDEQKSGTVLPAVEQCLNRSLYRPDAVAQPVTEDEFALESEIISKLYIPKRKIISPRSIEDVLPPVEEAVDRCLYLLDRFAQAVTKDKFALESENISEPYFTNRRTISQQSAEKLDAACGIDKTENGTLFEDQNVDKEGKALPATGQKANVSPEQPPLFTHTVKDSDHISTRFLGSMDSLTSSEESSERPPLSTLTLKEADPSSKAAMRRKDSPPPGKVSSQKQPAEKATSDDKDSVSNIATEIKEGPISGTVSSQKQPAEKATSDEKDSVSNIATEIKEGQQSGTVSPQKQSAWKVIFKKKVSLLNIATRITGGGKSGTVSSQKQPPSKATSDKTDSALNIATEIKDGLQCGTVSSQKQPALKATTDEEDSVSNIATEIKDGEKSGTVSSQKQPALKATTDEEDSVSIIATEIKDGEKSGTVSSRKKPALKATSDEKDSFSNITREKKDGEISRTVTSEKPAGLKATSDEEDSVLNIARGKEDGEKTRRVSSRKKPALKATSDEKDSFSNITREKKDGETSRTVSSQKPPALKATSDEEDSVLNIAREKKDGEKSRTVSSEKPSGLKATSDEKDSVLNIARGKKHGEKTRRVSSHKQPALKATSDKENSVPNMATETKDEQISGTVSSQKQPALKATSDKKDSVSNIPTEIKDGQQSGTVSSQKQLAWKATSVKKDSVSNIATEIKDGQIRGTVSSQRQPALKATGDEKDSVSNIAREIKDGEKSGTVSPQKQSAQKVIFKKKVSLLNIATRITGGWKSGTEYPENLPTLKATIENKNSVLNTATKMKDVQTSTPEQDLEMASEGEQKRLEEYENNQPQVKNQIHSRDDLDDIIQSSQTVSEDGDSLCCNCKNVILLIDQHEMKCKDCVHLLKIKKTFCLCKRLTELKDNHCEQLRVKIRKLKNKASVLQKRLSEKEEIKSQLKHETLELEKELCSLRFAIQQEKKKRRNVEELHQKVREKLRITEEQYRIEADVTKPIKPALKSAEVELKTGGNNSNQVSETDEKEDLLHENRLMQDEIARLRLEKDTIKNQNLEKKYLKDFEIVKRKHEDLQKALKRNEETLAETIACYSGQLAALTDENTTLRSKLEKQRESGQRLETEMQSYRCRLNAALCDHDQSHSSKRDQELAFQGTVDKCCHLQENLNSHVLILSLQLSKAESKFRVLETELHYTGEALKEKALVFEHVQSELKQKQSQMKDIEKMYKSGYNTMEKCIEKQERFCQLKKQNMLLQQQLDDARNKADNQEKAILNIQARCDARVENLQAECRKHRLLLEEDNKMLVNELNHSKEKKCQYEKEKAEREVAVRQLQQKQDDVLNKRSATKALLDASSRHCIYLENGMQDSRKKLDQMRSQFQEIQDQLTATIRCTKEMEGDAQKLEVENVMMRKIIKKQDEQIERFEKILQHSSLMLQVFES.

ANK repeat units follow at residues 64–93 (KERT…ELNL), 97–126 (EDRT…DPNI), 130–159 (FGRT…NIEE), 163–192 (DEYP…NINA), and 196–225 (LGRS…DVFS). Disordered stretches follow at residues 260 to 365 (LSIN…DEQK), 501 to 526 (ALPA…VKDS), 538 to 653 (DSLT…QKQS), 671 to 1027 (RITG…QKQL), and 1051 to 1072 (IRGT…EKDS). 2 stretches are compositionally biased toward polar residues: residues 261–272 (SINSNPVSSQKQ) and 297–306 (KSGTVSSQKQ). Positions 539 to 555 (SLTSSEESSERPPLSTL) are enriched in low complexity. Composition is skewed to basic and acidic residues over residues 585–596 (PAEKATSDDKDS) and 619–630 (PAEKATSDEKDS). Polar residues-rich tracts occupy residues 631-653 (VSNI…QKQS) and 679-691 (GTVS…PSKA). The segment covering 794-813 (TSDEKDSFSNITREKKDGEI) has biased composition (basic and acidic residues). The residue at position 829 (Ser829) is a Phosphoserine. Composition is skewed to basic and acidic residues over residues 840–849 (RGKEDGEKTR) and 862–881 (TSDE…DGET). Residue Ser897 is modified to Phosphoserine. Basic and acidic residues predominate over residues 907–917 (AREKKDGEKSR). Positions 942–955 (RGKKHGEKTRRVSS) are enriched in basic residues. Polar residues-rich tracts occupy residues 983–992 (ISGTVSSQKQ) and 1005–1026 (VSNI…SQKQ). Coiled-coil stretches lie at residues 1157–1187 (EQDL…QIHS), 1247–1333 (ELKD…YRIE), 1362–1480 (SETD…DHDQ), and 1544–1768 (VFEH…ILQH).

This sequence belongs to the ANKRD36 family.

The sequence is that of Ankyrin repeat domain-containing protein 36C (ANKRD36C) from Homo sapiens (Human).